The primary structure comprises 468 residues: Peroxisome proliferator-activated receptor alpha (468 aa).

A DNA-binding region (nuclear receptor) is located at residues 99–173 (NIECRICGDK…VGMSHNAIRF (75 aa)). NR C4-type zinc fingers lie at residues 102 to 122 (CRIC…CEGC) and 139 to 161 (CDRS…FHKC). An NR LBD domain is found at 239-466 (FVIHDMETLC…HPLLQEIYRD (228 aa)). A required for heterodimerization with RXRA region spans residues 304–433 (DQVTLLKYGV…PKLLQKMVDL (130 aa)).

This sequence belongs to the nuclear hormone receptor family. NR1 subfamily. Heterodimer; with RXRA. This heterodimerization is required for DNA binding and transactivation activity. Interacts with NCOA3 coactivator. Interacts with CITED2; the interaction stimulates its transcriptional activity. Also interacts with PPARBP in vitro. Interacts with AKAP13, LPIN1, PRDM16 and coactivator NCOA6. Interacts with ASXL1 and ASXL2. Interacts with PER2. Interacts with SIRT1; the interaction seems to be modulated by NAD(+) levels. Interacts with CRY1 and CRY2. In hepatocytes, interacts with PAQR3 and HUWE1; the interactions promote PPARA poylubiquitination and HUWE1-mediated degradation. In terms of processing, phosphorylated. Ubiquitinated by E3 ubiquitin-protein ligase HUWE1; leading to proteasomal degradation. As to expression, expressed predominantly in liver and kidney.

It is found in the nucleus. Functionally, ligand-activated transcription factor. Key regulator of lipid metabolism. Activated by the endogenous ligand 1-palmitoyl-2-oleoyl-sn-glycerol-3-phosphocholine (16:0/18:1-GPC). Activated by oleylethanolamide, a naturally occurring lipid that regulates satiety. Receptor for peroxisome proliferators such as hypolipidemic drugs and fatty acids. Regulates the peroxisomal beta-oxidation pathway of fatty acids. Functions as a transcription activator for the ACOX1 and P450 genes. Transactivation activity requires heterodimerization with RXRA and is antagonized by NR2C2. May be required for the propagation of clock information to metabolic pathways regulated by PER2. The sequence is that of Peroxisome proliferator-activated receptor alpha (Ppara) from Rattus norvegicus (Rat).